A 188-amino-acid chain; its full sequence is MRGFYIGRFQPYHNGHHSMVERISEEVDELVLGIGSADDSHTTHDPFTAGERIMMITKAVAEYDLTTYVVPLEDINRNAVWVSHVESMCPDFDVAYSNNPLVVRLFEEAGIEVRQSPMFDRDRLEGSEIRQRMIDDESWRDRVPASVVEVIEEIHGIKRLQHVSDSDSLERYAATGESLPESLDDLDD.

Residues 166–188 (SDSLERYAATGESLPESLDDLDD) are disordered.

Belongs to the archaeal NMN adenylyltransferase family.

Its subcellular location is the cytoplasm. It catalyses the reaction beta-nicotinamide D-ribonucleotide + ATP + H(+) = diphosphate + NAD(+). It participates in cofactor biosynthesis; NAD(+) biosynthesis; NAD(+) from nicotinamide D-ribonucleotide: step 1/1. This Haloarcula marismortui (strain ATCC 43049 / DSM 3752 / JCM 8966 / VKM B-1809) (Halobacterium marismortui) protein is Nicotinamide-nucleotide adenylyltransferase.